A 445-amino-acid polypeptide reads, in one-letter code: MVRMEDIISLAKRKGFVFQSSEVYGGLSGAWDYGPLGVELKKNIKKEWWKSMVYLHENIVGLDSAIFMRPEIWRASGHVDGFSDSMVDCKDCKSRFRADFIDLSKNCPNCKVGNNFTSPRSFNLMFKTHIGVVEDSSSEVYLRPETAQGIFVNFRNVLDSSRLKIPFGIAQVGKAFRNEIVTKNFIFRTCEFEQMEMQFFVHPKQIDEWFCYWQQNRMNFFIETLKISPDRLRFKAHDSTQLAHYAKAAFDIEYEFPFGFQEVEGIHNRGNYDLTQHAKFSNKPKVFEYHDLLTKEKYVPYVIETSAGLTRSVLMTLCDAYSEEELSDGDKRIVLRLHPKLAPYKIAIFPLVKKVELTEIARRIYMELCDDFHIFYDDSGTIGKRYRRQDEIGTPYCVTIDYNTIEDETVTVRERNSMTQKRIFINDLYSYIKTEILNYKEDFNK.

Positions 97 and 145 each coordinate substrate. ATP is bound by residues 177–179 (RNE), 187–192 (FRTCEF), 262–263 (EV), and 308–311 (GLTR). 192 to 196 (FEQME) lines the substrate pocket. 304 to 308 (ETSAG) lines the substrate pocket.

This sequence belongs to the class-II aminoacyl-tRNA synthetase family. Homodimer.

Its subcellular location is the cytoplasm. The enzyme catalyses tRNA(Gly) + glycine + ATP = glycyl-tRNA(Gly) + AMP + diphosphate. In terms of biological role, catalyzes the attachment of glycine to tRNA(Gly). The chain is Glycine--tRNA ligase from Borreliella burgdorferi (strain ATCC 35210 / DSM 4680 / CIP 102532 / B31) (Borrelia burgdorferi).